Reading from the N-terminus, the 98-residue chain is Small ribosomal subunit protein bS6 (98 aa).

This sequence belongs to the bacterial ribosomal protein bS6 family.

Binds together with bS18 to 16S ribosomal RNA. The polypeptide is Small ribosomal subunit protein bS6 (Lactobacillus johnsonii (strain CNCM I-12250 / La1 / NCC 533)).